A 1122-amino-acid chain; its full sequence is Histone deacetylase 5 (1122 aa).

The interval 1-24 (MNSPNESDGMSGREPSLEILPRTS) is disordered. Lysine 35 participates in a covalent cross-link: Glycyl lysine isopeptide (Lys-Gly) (interchain with G-Cter in SUMO2). 2 disordered regions span residues 41–60 (AMPSSMGGGGGGSPSPVELR) and 196–281 (KEPT…SSPL). Positions 247–258 (DSRDDFPLRKTA) are enriched in basic and acidic residues. Serine 259 is modified (phosphoserine; by AMPK, CaMK1, SIK1 and PKD/PRKD1). The segment covering 272 to 281 (KVAERRSSPL) has biased composition (basic and acidic residues). The residue at position 292 (threonine 292) is a Phosphothreonine; by PKC. Disordered regions lie at residues 302-343 (GAGP…NIPT) and 481-504 (MRTVGKLPRHRPLSRTQSSPLPQS). A compositionally biased stretch (low complexity) spans 312-327 (NSAPGSGPSSPNSSHS). Over residues 328–340 (TIAENGFTGSVPN) the composition is skewed to polar residues. Residues 494-504 (SRTQSSPLPQS) are compositionally biased toward low complexity. Phosphoserine; by AMPK, CaMK1, SIK1 and PKD/PRKD1 is present on serine 498. Lysine 533 is subject to N6-acetyllysine. Residues 536–625 (TKTGELPRQP…GPDLEEPGAG (90 aa)) are disordered. Positions 581–621 (STQEDLEEEDEEDDGEEEEDCIQVKDEEGESGAEEGPDLEE) are enriched in acidic residues. Residues serine 611 and serine 661 each carry the phosphoserine modification. Residues 684 to 1028 (GVVYDTFMLK…VSALLSVELQ (345 aa)) form a histone deacetylase region. Residues cysteine 696, cysteine 698, histidine 704, and cysteine 781 each contribute to the Zn(2+) site. The active site involves histidine 833. The Nuclear export signal signature appears at 1081-1122 (EEAETVSAMALLSVGAEQAQAAAAREHSPRPAEEPMEQEPAL). The interval 1097 to 1122 (EQAQAAAAREHSPRPAEEPMEQEPAL) is disordered. Basic and acidic residues predominate over residues 1104–1113 (AREHSPRPAE). Serine 1108 carries the phosphoserine modification.

It belongs to the histone deacetylase family. HD type 2 subfamily. As to quaternary structure, interacts with AHRR, BAHD1, BCOR, HDAC7, HDAC9, CTBP1, MEF2C, NCOR2, NRIP1, PHB2 and a 14-3-3 chaperone protein. Interacts with BCL6, DDIT3/CHOP, GRK5, KDM5B and MYOCD. Interacts with EP300 in the presence of TFAP2C. Interacts with ANKRA2. Interacts with CUL7 (as part of the 3M complex); negatively regulated by ANKRA2. Interacts with ZBTB7B; the interaction allows the recruitment of HDAC4 on CD8 loci for deacetylation and possible inhibition of CD8 genes expression. Interacts with RARA. Phosphorylated by AMPK, CaMK1, SIK1 and PRKD1 at Ser-259 and Ser-498. The phosphorylation is required for the export to the cytoplasm and inhibition. Phosphorylated by the PKC kinases PKN1 and PKN2, impairing nuclear import. Phosphorylated by GRK5, leading to nuclear export of HDAC5 and allowing MEF2-mediated transcription. Post-translationally, ubiquitinated. Polyubiquitination however does not lead to its degradation. Ubiquitous.

Its subcellular location is the nucleus. The protein resides in the cytoplasm. The enzyme catalyses N(6)-acetyl-L-lysyl-[histone] + H2O = L-lysyl-[histone] + acetate. Its function is as follows. Responsible for the deacetylation of lysine residues on the N-terminal part of the core histones (H2A, H2B, H3 and H4). Histone deacetylation gives a tag for epigenetic repression and plays an important role in transcriptional regulation, cell cycle progression and developmental events. Histone deacetylases act via the formation of large multiprotein complexes. Involved in muscle maturation by repressing transcription of myocyte enhancer MEF2C. During muscle differentiation, it shuttles into the cytoplasm, allowing the expression of myocyte enhancer factors. Involved in the MTA1-mediated epigenetic regulation of ESR1 expression in breast cancer. Serves as a corepressor of RARA and causes its deacetylation. In association with RARA, plays a role in the repression of microRNA-10a and thereby in the inflammatory response. The polypeptide is Histone deacetylase 5 (HDAC5) (Homo sapiens (Human)).